We begin with the raw amino-acid sequence, 384 residues long: Guanine nucleotide-binding protein alpha-1 subunit (384 aa).

The interval 1 to 22 (MGSLCSRNKHYSQADDEENTQT) is disordered. A lipid anchor (N-myristoyl glycine) is attached at Gly-2. A lipid anchor (S-palmitoyl cysteine) is attached at Cys-5. The G-alpha domain occupies 38–384 (HIQKLLLLGA…RRNLFEAGLL (347 aa)). Residues 41-54 (KLLLLGAGDSGKST) form a G1 motif region. GTP is bound by residues Asp-49, Ser-50, Gly-51, Lys-52, Ser-53, Thr-54, Asp-163, Leu-188, Thr-194, Gly-222, Asn-288, Lys-289, Asp-291, and Ala-356. A Mg(2+)-binding site is contributed by Ser-53. The G2 motif stretch occupies residues 186–194 (DVLFARIRT). Thr-194 serves as a coordination point for Mg(2+). A G3 motif region spans residues 215–224 (YRLFDVGGQR). The tract at residues 284-291 (MLFLNKFD) is G4 motif. A G5 motif region spans residues 354 to 359 (TTALDQ).

This sequence belongs to the G-alpha family. As to quaternary structure, g proteins are composed of 3 units; alpha, beta and gamma. The alpha chain contains the guanine nucleotide binding site. It depends on Mg(2+) as a cofactor.

Guanine nucleotide-binding proteins (G proteins) are involved as modulators or transducers in various transmembrane signaling systems. This Solanum tuberosum (Potato) protein is Guanine nucleotide-binding protein alpha-1 subunit (GPA1).